A 163-amino-acid polypeptide reads, in one-letter code: Staphylokinase (163 aa).

The first 27 residues, 1-27 (MLKRSLLFLTVLLLLFSFSSITNEVSA), serve as a signal peptide directing secretion.

The protein belongs to the staphylokinase family.

Its subcellular location is the secreted. Its function is as follows. Potent plasminogen activator that converts plasminogen into plasmin. It forms a 1:1 complex with plasmin, which in turn activates other plasminogen molecules. This chain is Staphylokinase, found in Staphylococcus phage S phi-C (Bacteriophage S phi-C).